We begin with the raw amino-acid sequence, 155 residues long: SsrA-binding protein (155 aa).

The disordered stretch occupies residues 136–155; the sequence is RESLKRRQDQRDMQRAMKNY.

The protein belongs to the SmpB family.

Its subcellular location is the cytoplasm. In terms of biological role, required for rescue of stalled ribosomes mediated by trans-translation. Binds to transfer-messenger RNA (tmRNA), required for stable association of tmRNA with ribosomes. tmRNA and SmpB together mimic tRNA shape, replacing the anticodon stem-loop with SmpB. tmRNA is encoded by the ssrA gene; the 2 termini fold to resemble tRNA(Ala) and it encodes a 'tag peptide', a short internal open reading frame. During trans-translation Ala-aminoacylated tmRNA acts like a tRNA, entering the A-site of stalled ribosomes, displacing the stalled mRNA. The ribosome then switches to translate the ORF on the tmRNA; the nascent peptide is terminated with the 'tag peptide' encoded by the tmRNA and targeted for degradation. The ribosome is freed to recommence translation, which seems to be the essential function of trans-translation. The polypeptide is SsrA-binding protein (Nostoc sp. (strain PCC 7120 / SAG 25.82 / UTEX 2576)).